Consider the following 515-residue polypeptide: 1-pyrroline-5-carboxylate dehydrogenase (515 aa).

Catalysis depends on residues Glu-286 and Cys-320.

Belongs to the aldehyde dehydrogenase family. RocA subfamily.

The catalysed reaction is L-glutamate 5-semialdehyde + NAD(+) + H2O = L-glutamate + NADH + 2 H(+). Its pathway is amino-acid degradation; L-proline degradation into L-glutamate; L-glutamate from L-proline: step 2/2. The chain is 1-pyrroline-5-carboxylate dehydrogenase from Bacillus mycoides (strain KBAB4) (Bacillus weihenstephanensis).